Consider the following 238-residue polypeptide: Urease subunit alpha (238 aa).

The tract at residues 1–102 (MKLTPKELDK…LVTVHTPIES (102 aa)) is urease gamma. The tract at residues 103–238 (KGKLVPGELF…DDNYVKTIKE (136 aa)) is urease beta.

In the N-terminal section; belongs to the urease gamma subunit family. The protein in the C-terminal section; belongs to the urease beta subunit family. In terms of assembly, heterohexamer of 3 UreA (alpha) and 3 UreB (beta) subunits.

It localises to the cytoplasm. It catalyses the reaction urea + 2 H2O + H(+) = hydrogencarbonate + 2 NH4(+). It functions in the pathway nitrogen metabolism; urea degradation; CO(2) and NH(3) from urea (urease route): step 1/1. The protein is Urease subunit alpha of Helicobacter acinonychis (strain Sheeba).